The sequence spans 348 residues: ECA polysaccharide chain length modulation protein (348 aa).

The Cytoplasmic portion of the chain corresponds to 1 to 30 (MTQPMPGKPAEDAENELDIRGLFRTLWAGK). Residues 31–51 (LWIIGMGLAFALIALAYTFFA) traverse the membrane as a helical segment. The Periplasmic segment spans residues 52–322 (RQEWSSTAIT…EPVKRDSPRR (271 aa)). A helical transmembrane segment spans residues 323–343 (AFLMIMWGIVGGLIGAGVALT). Over 344–348 (RRCSK) the chain is Cytoplasmic.

This sequence belongs to the WzzB/Cld/Rol family. In terms of assembly, homooctamer. Probably part of a complex composed of WzxE, WzyE and WzzE.

The protein localises to the cell inner membrane. The protein operates within bacterial outer membrane biogenesis; enterobacterial common antigen biosynthesis. Functionally, modulates the polysaccharide chain length of enterobacterial common antigen (ECA). This is ECA polysaccharide chain length modulation protein from Escherichia coli O157:H7.